We begin with the raw amino-acid sequence, 215 residues long: Secretory component protein psh3 (215 aa).

Over 1-21 (MAKRSIFRFADEKGLKVAARY) the chain is Cytoplasmic. The chain crosses the membrane as a helical span at residues 22–42 (GVLMSTSFIFALLFHSSVADV). Over 43–67 (NTLWSPGPESAFDAAETYYTLVAGS) the chain is Extracellular. A helical membrane pass occupies residues 68-88 (HFIVKYTVYTIMGLNMIFHLI). Over 89 to 105 (QATGAKGDDKLFFYSST) the chain is Cytoplasmic. The helical transmembrane segment at 106–126 (LLYLTALILFIVNVAPSMLVV) threads the bilayer. Residues 127–147 (KLQNYVQFPRNMHLSVLAASH) are Extracellular-facing. The helical transmembrane segment at 148 to 168 (VLVEFLLAGVILIQLGYVFGY) threads the bilayer. Residues 169-215 (HVQSIQQREYAEDMREQELAEKAKLESESATTQSVETVSTESVSKRK) lie on the Cytoplasmic side of the membrane. The segment at 190–215 (KAKLESESATTQSVETVSTESVSKRK) is disordered. Positions 196-215 (ESATTQSVETVSTESVSKRK) are enriched in low complexity.

To yeast SHR3. Monomer.

The protein localises to the endoplasmic reticulum membrane. Involved in amino acid permease processing and required for the efficient translocation of structurally related amino acid permeases from the endoplasmic reticulum to the plasma membrane. This Schizosaccharomyces pombe (strain 972 / ATCC 24843) (Fission yeast) protein is Secretory component protein psh3 (psh3).